We begin with the raw amino-acid sequence, 217 residues long: Octanoyltransferase (217 aa).

The 176-residue stretch at 32 to 207 (SDSPDELWIV…TLSQLLGYQQ (176 aa)) folds into the BPL/LPL catalytic domain. Substrate is bound by residues 71–78 (RGGQVTYH), 138–140 (SLG), and 151–153 (GLA). C169 acts as the Acyl-thioester intermediate in catalysis.

The protein belongs to the LipB family.

Its subcellular location is the cytoplasm. The catalysed reaction is octanoyl-[ACP] + L-lysyl-[protein] = N(6)-octanoyl-L-lysyl-[protein] + holo-[ACP] + H(+). It participates in protein modification; protein lipoylation via endogenous pathway; protein N(6)-(lipoyl)lysine from octanoyl-[acyl-carrier-protein]: step 1/2. In terms of biological role, catalyzes the transfer of endogenously produced octanoic acid from octanoyl-acyl-carrier-protein onto the lipoyl domains of lipoate-dependent enzymes. Lipoyl-ACP can also act as a substrate although octanoyl-ACP is likely to be the physiological substrate. The protein is Octanoyltransferase of Shewanella sp. (strain MR-7).